Reading from the N-terminus, the 229-residue chain is MKIVILLSGGLDSTTVLYLARSLGHDCYALSFNYGQRHKQELAAAIAVAQLAGVIQHQVISFDLGLWGGSALTDYTLDLPQNRAFKEMAEQIPITYVPARNTIFLSFALSYAEAIGATQVYAGMNAIDYSGYPDCRPDYIAAMQEVYRLGTKQGREGEPIQIITPLIDLTKPAIIQLGNRLGVPWAKTWSCYSDGGGNDPPVACGVCDSCRLRLAAFAELSLTDPLPYR.

7 to 17 provides a ligand contact to ATP; that stretch reads LSGGLDSTTVL. The Zn(2+) site is built by cysteine 191, cysteine 204, cysteine 207, and cysteine 210.

This sequence belongs to the QueC family. It depends on Zn(2+) as a cofactor.

It catalyses the reaction 7-carboxy-7-deazaguanine + NH4(+) + ATP = 7-cyano-7-deazaguanine + ADP + phosphate + H2O + H(+). Its pathway is purine metabolism; 7-cyano-7-deazaguanine biosynthesis. Functionally, catalyzes the ATP-dependent conversion of 7-carboxy-7-deazaguanine (CDG) to 7-cyano-7-deazaguanine (preQ(0)). The protein is 7-cyano-7-deazaguanine synthase of Cyanothece sp. (strain PCC 7425 / ATCC 29141).